The primary structure comprises 274 residues: 2,3,4,5-tetrahydropyridine-2,6-dicarboxylate N-succinyltransferase (274 aa).

The substrate site is built by Arg-106 and Asp-143.

The protein belongs to the transferase hexapeptide repeat family. As to quaternary structure, homotrimer.

The protein resides in the cytoplasm. The catalysed reaction is (S)-2,3,4,5-tetrahydrodipicolinate + succinyl-CoA + H2O = (S)-2-succinylamino-6-oxoheptanedioate + CoA. The protein operates within amino-acid biosynthesis; L-lysine biosynthesis via DAP pathway; LL-2,6-diaminopimelate from (S)-tetrahydrodipicolinate (succinylase route): step 1/3. This Rickettsia felis (strain ATCC VR-1525 / URRWXCal2) (Rickettsia azadi) protein is 2,3,4,5-tetrahydropyridine-2,6-dicarboxylate N-succinyltransferase.